The primary structure comprises 286 residues: Release factor glutamine methyltransferase (286 aa).

S-adenosyl-L-methionine-binding positions include 122–126 (GTGTG), aspartate 145, tryptophan 173, and asparagine 188. 188–191 (NPPY) lines the substrate pocket.

Belongs to the protein N5-glutamine methyltransferase family. PrmC subfamily.

It carries out the reaction L-glutaminyl-[peptide chain release factor] + S-adenosyl-L-methionine = N(5)-methyl-L-glutaminyl-[peptide chain release factor] + S-adenosyl-L-homocysteine + H(+). Methylates the class 1 translation termination release factors RF1/PrfA and RF2/PrfB on the glutamine residue of the universally conserved GGQ motif. This is Release factor glutamine methyltransferase from Shewanella oneidensis (strain ATCC 700550 / JCM 31522 / CIP 106686 / LMG 19005 / NCIMB 14063 / MR-1).